Here is a 456-residue protein sequence, read N- to C-terminus: Bifunctional protein GlmU (456 aa).

Residues 1–229 (MSNSAMSVVI…LSEVEGVNNR (229 aa)) form a pyrophosphorylase region. UDP-N-acetyl-alpha-D-glucosamine contacts are provided by residues 11–14 (LAAG), K25, Q76, 81–82 (GT), 103–105 (YGD), G140, E154, N169, and N227. D105 lines the Mg(2+) pocket. Position 227 (N227) interacts with Mg(2+). The linker stretch occupies residues 230–250 (LQLARLERVYQAEQAEKLLLA). The tract at residues 251–456 (GVMLRDPARF…QGWQRPVKKK (206 aa)) is N-acetyltransferase. 2 residues coordinate UDP-N-acetyl-alpha-D-glucosamine: R333 and K351. H363 functions as the Proton acceptor in the catalytic mechanism. UDP-N-acetyl-alpha-D-glucosamine contacts are provided by Y366 and N377. Acetyl-CoA contacts are provided by residues A380, 386 to 387 (NY), S405, A423, and R440.

It in the N-terminal section; belongs to the N-acetylglucosamine-1-phosphate uridyltransferase family. The protein in the C-terminal section; belongs to the transferase hexapeptide repeat family. In terms of assembly, homotrimer. The cofactor is Mg(2+).

It localises to the cytoplasm. The catalysed reaction is alpha-D-glucosamine 1-phosphate + acetyl-CoA = N-acetyl-alpha-D-glucosamine 1-phosphate + CoA + H(+). The enzyme catalyses N-acetyl-alpha-D-glucosamine 1-phosphate + UTP + H(+) = UDP-N-acetyl-alpha-D-glucosamine + diphosphate. It functions in the pathway nucleotide-sugar biosynthesis; UDP-N-acetyl-alpha-D-glucosamine biosynthesis; N-acetyl-alpha-D-glucosamine 1-phosphate from alpha-D-glucosamine 6-phosphate (route II): step 2/2. The protein operates within nucleotide-sugar biosynthesis; UDP-N-acetyl-alpha-D-glucosamine biosynthesis; UDP-N-acetyl-alpha-D-glucosamine from N-acetyl-alpha-D-glucosamine 1-phosphate: step 1/1. It participates in bacterial outer membrane biogenesis; LPS lipid A biosynthesis. In terms of biological role, catalyzes the last two sequential reactions in the de novo biosynthetic pathway for UDP-N-acetylglucosamine (UDP-GlcNAc). The C-terminal domain catalyzes the transfer of acetyl group from acetyl coenzyme A to glucosamine-1-phosphate (GlcN-1-P) to produce N-acetylglucosamine-1-phosphate (GlcNAc-1-P), which is converted into UDP-GlcNAc by the transfer of uridine 5-monophosphate (from uridine 5-triphosphate), a reaction catalyzed by the N-terminal domain. The sequence is that of Bifunctional protein GlmU from Klebsiella pneumoniae subsp. pneumoniae (strain ATCC 700721 / MGH 78578).